The following is a 948-amino-acid chain: Protein translocase subunit SecA (948 aa).

ATP contacts are provided by residues glutamine 91, 109-113 (GEGKT), and aspartate 509.

It belongs to the SecA family. Monomer and homodimer. Part of the essential Sec protein translocation apparatus which comprises SecA, SecYEG and auxiliary proteins SecDF. Other proteins may also be involved.

The protein localises to the cell inner membrane. Its subcellular location is the cellular thylakoid membrane. It is found in the cytoplasm. It catalyses the reaction ATP + H2O + cellular proteinSide 1 = ADP + phosphate + cellular proteinSide 2.. Functionally, part of the Sec protein translocase complex. Interacts with the SecYEG preprotein conducting channel. Has a central role in coupling the hydrolysis of ATP to the transfer of proteins into and across the cell membrane, serving as an ATP-driven molecular motor driving the stepwise translocation of polypeptide chains across the membrane. Its function is as follows. Probably participates in protein translocation into and across both the cytoplasmic and thylakoid membranes in cyanobacterial cells. The polypeptide is Protein translocase subunit SecA (Synechococcus elongatus (strain ATCC 33912 / PCC 7942 / FACHB-805) (Anacystis nidulans R2)).